Reading from the N-terminus, the 149-residue chain is Ribonuclease pancreatic (149 aa).

A signal peptide spans 1-25; that stretch reads MGLEKSLILFPLLVLVLGWVQPSLA. Residues Lys-32 and Arg-35 each coordinate substrate. His-37 serves as the catalytic Proton acceptor. Intrachain disulfides connect Cys-51/Cys-109, Cys-65/Cys-120, Cys-83/Cys-135, and Cys-90/Cys-97. Substrate-binding positions include 66–70, Lys-91, and Arg-110; that span reads KPVNT. His-144 serves as the catalytic Proton donor.

This sequence belongs to the pancreatic ribonuclease family. In terms of assembly, monomer. Interacts with and forms tight 1:1 complexes with RNH1. Dimerization of two such complexes may occur. Interaction with RNH1 inhibits this protein. Pancreas.

The protein localises to the secreted. The enzyme catalyses an [RNA] containing cytidine + H2O = an [RNA]-3'-cytidine-3'-phosphate + a 5'-hydroxy-ribonucleotide-3'-[RNA].. The catalysed reaction is an [RNA] containing uridine + H2O = an [RNA]-3'-uridine-3'-phosphate + a 5'-hydroxy-ribonucleotide-3'-[RNA].. Endonuclease that catalyzes the cleavage of RNA on the 3' side of pyrimidine nucleotides. Acts on single-stranded and double-stranded RNA. This chain is Ribonuclease pancreatic (RNASE1), found in Uranomys ruddi (White-bellied brush-furred rat).